The sequence spans 206 residues: MSSSLSQTSKYQATSVVNGLLSNLLPGVPKIRANNGKTSVNNGSTAQLIDRNLKKRVQLQNRDVHKIKKKCKLVKKKQVKKHKLDKEQLEQLAKHQVLKKHQQEGTLTDHERKYLNKLIKRNSQNLRSWDLEEEVRDELEDIQQSILKDTVSTANTDRSKRRRFKRKQFKEDIKESDFVKDHRYPGLTPGLAPVGLSDEEDSSEED.

Residues 178 to 206 are disordered; sequence FVKDHRYPGLTPGLAPVGLSDEEDSSEED. Residues Ser197, Ser202, and Ser203 each carry the phosphoserine modification. Acidic residues predominate over residues 197-206; sequence SDEEDSSEED.

This sequence belongs to the RRT14 family.

Its subcellular location is the nucleus. It is found in the nucleolus. Its function is as follows. Involved in ribosome biogenesis, probably through modulation of rDNA transcription. This is Regulator of rDNA transcription 14 (RRT14) from Saccharomyces cerevisiae (strain JAY291) (Baker's yeast).